Reading from the N-terminus, the 103-residue chain is Large ribosomal subunit protein uL24 (103 aa).

It belongs to the universal ribosomal protein uL24 family. As to quaternary structure, part of the 50S ribosomal subunit.

One of two assembly initiator proteins, it binds directly to the 5'-end of the 23S rRNA, where it nucleates assembly of the 50S subunit. In terms of biological role, one of the proteins that surrounds the polypeptide exit tunnel on the outside of the subunit. This is Large ribosomal subunit protein uL24 from Lacticaseibacillus casei (strain BL23) (Lactobacillus casei).